Reading from the N-terminus, the 75-residue chain is Accessory gland-specific peptide 57Da (75 aa).

The first 19 residues, 1-19 (MKFLALFVTLLVVLALVSA), serve as a signal peptide directing secretion. Residues 55-75 (AAPAAAPAAPEAGLADAPAES) form a disordered region. Residues 56–75 (APAAAPAAPEAGLADAPAES) show a composition bias toward low complexity.

In terms of tissue distribution, lumen fluid of male accessory glands, becomes seminal fluid.

The protein localises to the secreted. Its function is as follows. Transferred from male to female during mating and may affect egglaying and behavior after mating. This Drosophila melanogaster (Fruit fly) protein is Accessory gland-specific peptide 57Da (Mst57Da).